We begin with the raw amino-acid sequence, 346 residues long: Extracellular protease (346 aa).

The signal sequence occupies residues Met-1 to Ala-21. His-296 is a binding site for Zn(2+). Residue Glu-297 is part of the active site. Residues His-300 and Asp-309 each contribute to the Zn(2+) site.

It belongs to the peptidase M35 family. It depends on Zn(2+) as a cofactor.

Functionally, heat-labile protease. This chain is Extracellular protease, found in Aeromonas hydrophila.